Here is a 223-residue protein sequence, read N- to C-terminus: Deoxyribose-phosphate aldolase (223 aa).

The Proton donor/acceptor role is filled by aspartate 92. The active-site Schiff-base intermediate with acetaldehyde is the lysine 158. Lysine 188 functions as the Proton donor/acceptor in the catalytic mechanism.

The protein belongs to the DeoC/FbaB aldolase family. DeoC type 1 subfamily.

The protein resides in the cytoplasm. It carries out the reaction 2-deoxy-D-ribose 5-phosphate = D-glyceraldehyde 3-phosphate + acetaldehyde. Its pathway is carbohydrate degradation; 2-deoxy-D-ribose 1-phosphate degradation; D-glyceraldehyde 3-phosphate and acetaldehyde from 2-deoxy-alpha-D-ribose 1-phosphate: step 2/2. In terms of biological role, catalyzes a reversible aldol reaction between acetaldehyde and D-glyceraldehyde 3-phosphate to generate 2-deoxy-D-ribose 5-phosphate. The chain is Deoxyribose-phosphate aldolase from Mycolicibacterium paratuberculosis (strain ATCC BAA-968 / K-10) (Mycobacterium paratuberculosis).